A 604-amino-acid chain; its full sequence is Elongation factor 4 (604 aa).

The tr-type G domain maps to 7 to 189; it reads SKIRNFCIIA…SIVHLVPPPS (183 aa). Residues 19–24 and 136–139 contribute to the GTP site; these read DHGKST and NKID.

It belongs to the TRAFAC class translation factor GTPase superfamily. Classic translation factor GTPase family. LepA subfamily.

It localises to the cell inner membrane. It carries out the reaction GTP + H2O = GDP + phosphate + H(+). In terms of biological role, required for accurate and efficient protein synthesis under certain stress conditions. May act as a fidelity factor of the translation reaction, by catalyzing a one-codon backward translocation of tRNAs on improperly translocated ribosomes. Back-translocation proceeds from a post-translocation (POST) complex to a pre-translocation (PRE) complex, thus giving elongation factor G a second chance to translocate the tRNAs correctly. Binds to ribosomes in a GTP-dependent manner. The polypeptide is Elongation factor 4 (Synechococcus elongatus (strain ATCC 33912 / PCC 7942 / FACHB-805) (Anacystis nidulans R2)).